We begin with the raw amino-acid sequence, 1079 residues long: Isoleucine--tRNA ligase (1079 aa).

Residues 53–63 carry the 'HIGH' region motif; the sequence is PFANGLPHYGH. The 'KMSKS' region motif lies at 611–615; that stretch reads KLSKR. Residue K614 coordinates ATP.

This sequence belongs to the class-I aminoacyl-tRNA synthetase family. IleS type 2 subfamily. In terms of assembly, monomer. Zn(2+) serves as cofactor.

It localises to the cytoplasm. The enzyme catalyses tRNA(Ile) + L-isoleucine + ATP = L-isoleucyl-tRNA(Ile) + AMP + diphosphate. In terms of biological role, catalyzes the attachment of isoleucine to tRNA(Ile). As IleRS can inadvertently accommodate and process structurally similar amino acids such as valine, to avoid such errors it has two additional distinct tRNA(Ile)-dependent editing activities. One activity is designated as 'pretransfer' editing and involves the hydrolysis of activated Val-AMP. The other activity is designated 'posttransfer' editing and involves deacylation of mischarged Val-tRNA(Ile). In Rickettsia canadensis (strain McKiel), this protein is Isoleucine--tRNA ligase.